The primary structure comprises 305 residues: Glycine--tRNA ligase alpha subunit (305 aa).

This sequence belongs to the class-II aminoacyl-tRNA synthetase family. Tetramer of two alpha and two beta subunits.

It is found in the cytoplasm. The enzyme catalyses tRNA(Gly) + glycine + ATP = glycyl-tRNA(Gly) + AMP + diphosphate. The sequence is that of Glycine--tRNA ligase alpha subunit from Streptococcus pneumoniae (strain ATCC BAA-255 / R6).